A 424-amino-acid chain; its full sequence is CinA-like protein (424 aa).

This sequence belongs to the CinA family.

In Prochlorococcus marinus (strain MIT 9215), this protein is CinA-like protein.